A 388-amino-acid chain; its full sequence is Probable peptidoglycan glycosyltransferase FtsW (388 aa).

11 helical membrane passes run 16 to 36, 54 to 74, 82 to 102, 109 to 129, 144 to 164, 167 to 187, 189 to 209, 233 to 253, 277 to 297, 310 to 330, and 342 to 362; these read LVLIVLALITIGLVMVLSSSV, VFALGVGGLFAALVLMVPSQS, WFLLGLVLLALVLIFGREIGG, LVVMNFQPAEWMKIATILFLA, TAVIRLFLPFGIMAGLLLLQP, GTTVLIAGVLVGMLFIAGAPF, YFVITVLPIGAILAVLLINSP, SQALMAIGSGGITGSGLGASV, WLGVVILLSLYGLLLWRMFAV, ALVVYGVAIMFAGQLLINVGV, and LPFVSYGGSSLMMALLAIGLV.

The protein belongs to the SEDS family. FtsW subfamily.

The protein localises to the cell inner membrane. It catalyses the reaction [GlcNAc-(1-&gt;4)-Mur2Ac(oyl-L-Ala-gamma-D-Glu-L-Lys-D-Ala-D-Ala)](n)-di-trans,octa-cis-undecaprenyl diphosphate + beta-D-GlcNAc-(1-&gt;4)-Mur2Ac(oyl-L-Ala-gamma-D-Glu-L-Lys-D-Ala-D-Ala)-di-trans,octa-cis-undecaprenyl diphosphate = [GlcNAc-(1-&gt;4)-Mur2Ac(oyl-L-Ala-gamma-D-Glu-L-Lys-D-Ala-D-Ala)](n+1)-di-trans,octa-cis-undecaprenyl diphosphate + di-trans,octa-cis-undecaprenyl diphosphate + H(+). Its pathway is cell wall biogenesis; peptidoglycan biosynthesis. In terms of biological role, peptidoglycan polymerase that is essential for cell division. The polypeptide is Probable peptidoglycan glycosyltransferase FtsW (Thiomicrospira cyclica (strain DSM 14477 / JCM 11371 / ALM1) (Thioalkalimicrobium cyclicum)).